Consider the following 718-residue polypeptide: Polyribonucleotide nucleotidyltransferase (718 aa).

Mg(2+) contacts are provided by aspartate 493 and aspartate 499. One can recognise a KH domain in the interval proline 560–isoleucine 619. Residues glycine 629–lysine 697 enclose the S1 motif domain.

This sequence belongs to the polyribonucleotide nucleotidyltransferase family. The cofactor is Mg(2+).

It is found in the cytoplasm. The catalysed reaction is RNA(n+1) + phosphate = RNA(n) + a ribonucleoside 5'-diphosphate. Its function is as follows. Involved in mRNA degradation. Catalyzes the phosphorolysis of single-stranded polyribonucleotides processively in the 3'- to 5'-direction. The protein is Polyribonucleotide nucleotidyltransferase of Paraburkholderia phytofirmans (strain DSM 17436 / LMG 22146 / PsJN) (Burkholderia phytofirmans).